Reading from the N-terminus, the 446-residue chain is DNA repair protein RadA (446 aa).

The C4-type zinc finger occupies 10–27 (CSNCGNTSPKWSGQCFDC). 91–98 (GDPGIGKS) is an ATP binding site. The short motif at 250–254 (KNRFG) is the RadA KNRFG motif element. Residues 349 to 446 (EVYLSIAGGL…HLKDLKEIIR (98 aa)) form a lon-protease-like region.

It belongs to the RecA family. RadA subfamily.

Functionally, DNA-dependent ATPase involved in processing of recombination intermediates, plays a role in repairing DNA breaks. Stimulates the branch migration of RecA-mediated strand transfer reactions, allowing the 3' invading strand to extend heteroduplex DNA faster. Binds ssDNA in the presence of ADP but not other nucleotides, has ATPase activity that is stimulated by ssDNA and various branched DNA structures, but inhibited by SSB. Does not have RecA's homology-searching function. This Rickettsia felis (strain ATCC VR-1525 / URRWXCal2) (Rickettsia azadi) protein is DNA repair protein RadA.